The chain runs to 190 residues: MSAREEKHQRGSKRPAARREEEAGCGSWEQADLGNEERKQKFLRLMGAGKKEHTGRLVIGDHKSTSHFRSGAEDQKISDELEHQYQQSMDSSLSGRNRRHCGLGFSESETAEEKAPPPPPEHPPKTESESESSSEVSSEEEEEEESDSDSASDDDTAHKRKPTEQSDKDIPDSKDPKSNYKMLFVKSTGS.

A disordered region spans residues Met-1–Ser-190. The segment covering Gly-49–His-83 has biased composition (basic and acidic residues). The span at Gln-84–Gly-95 shows a compositional bias: polar residues. Residues Glu-129 to Asp-154 show a composition bias toward acidic residues. The span at Pro-162 to Ser-178 shows a compositional bias: basic and acidic residues.

It belongs to the SMAP family.

The protein is Small acidic protein (smap) of Xenopus tropicalis (Western clawed frog).